Consider the following 229-residue polypeptide: Protein GLC8 (229 aa).

Disordered stretches follow at residues 1–21 (MGGI…QQDP), 35–62 (TQKN…EIIG), and 107–229 (QFQD…TKEP). Position 12 is a phosphoserine (serine 12). Residues 107 to 117 (QFQDIHIDEPK) are compositionally biased toward basic and acidic residues. Threonine 118 is modified (phosphothreonine; by PHO85). The residue at position 158 (serine 158) is a Phosphoserine. The span at 164–173 (FEIKENKQPD) shows a compositional bias: basic and acidic residues. Over residues 175 to 184 (ETNDENDEDS) the composition is skewed to acidic residues. Serine 184 bears the Phosphoserine mark. Residues 185–196 (PEARHKKFEEMR) are compositionally biased toward basic and acidic residues.

Phosphorylated by the cyclin-CDKs PCL6-PHO85 and PCL7-PHO85. Phosphorylation of Thr-118 inactivates GLC8.

Modulator of GLC7 type-1 protein phosphatase. The chain is Protein GLC8 (GLC8) from Saccharomyces cerevisiae (strain ATCC 204508 / S288c) (Baker's yeast).